We begin with the raw amino-acid sequence, 176 residues long: Protein GrpE (176 aa).

This sequence belongs to the GrpE family. As to quaternary structure, homodimer.

It is found in the cytoplasm. Its function is as follows. Participates actively in the response to hyperosmotic and heat shock by preventing the aggregation of stress-denatured proteins, in association with DnaK and GrpE. It is the nucleotide exchange factor for DnaK and may function as a thermosensor. Unfolded proteins bind initially to DnaJ; upon interaction with the DnaJ-bound protein, DnaK hydrolyzes its bound ATP, resulting in the formation of a stable complex. GrpE releases ADP from DnaK; ATP binding to DnaK triggers the release of the substrate protein, thus completing the reaction cycle. Several rounds of ATP-dependent interactions between DnaJ, DnaK and GrpE are required for fully efficient folding. The chain is Protein GrpE from Rickettsia bellii (strain OSU 85-389).